Reading from the N-terminus, the 373-residue chain is Transmembrane protein adipocyte-associated 1 (373 aa).

Residues asparagine 11 and asparagine 23 are each glycosylated (N-linked (GlcNAc...) asparagine). Transmembrane regions (helical) follow at residues 48-68 (LLLL…LPSA), 76-96 (SSPI…VGIA), 123-143 (FFLL…GHLE), 151-171 (VLAI…TLEI), 192-212 (QFWL…VILP), 234-254 (ILAL…FDII), and 265-285 (FLYF…GFFG). Residue asparagine 361 is glycosylated (N-linked (GlcNAc...) asparagine).

The protein belongs to the UPF0359 family. In terms of tissue distribution, ubiquitous, with higher levels in heart, placenta and kidney.

The protein localises to the membrane. The sequence is that of Transmembrane protein adipocyte-associated 1 (TPRA1) from Homo sapiens (Human).